A 59-amino-acid chain; its full sequence is DNA-directed RNA polymerase subunit Rpo6 (59 aa).

This sequence belongs to the archaeal Rpo6/eukaryotic RPB6 RNA polymerase subunit family. As to quaternary structure, part of the RNA polymerase complex.

The protein localises to the cytoplasm. The catalysed reaction is RNA(n) + a ribonucleoside 5'-triphosphate = RNA(n+1) + diphosphate. Its function is as follows. DNA-dependent RNA polymerase (RNAP) catalyzes the transcription of DNA into RNA using the four ribonucleoside triphosphates as substrates. The chain is DNA-directed RNA polymerase subunit Rpo6 from Halorubrum lacusprofundi (strain ATCC 49239 / DSM 5036 / JCM 8891 / ACAM 34).